The chain runs to 224 residues: UPF0758 protein lmo1549 (224 aa).

The MPN domain maps to 102–224; it reads VVRCPEDAVK…YISLKEKGYF (123 aa). Zn(2+)-binding residues include His173, His175, and Asp186. The JAMM motif motif lies at 173 to 186; that stretch reads HNHPSGDPTPSSED.

Belongs to the UPF0758 family.

The sequence is that of UPF0758 protein lmo1549 from Listeria monocytogenes serovar 1/2a (strain ATCC BAA-679 / EGD-e).